The sequence spans 100 residues: Small ribosomal subunit protein uS14 (100 aa).

Zn(2+) contacts are provided by C63, C66, C79, and C82.

Belongs to the universal ribosomal protein uS14 family. As to quaternary structure, part of the 30S ribosomal subunit. Contacts proteins S3 and S10. It depends on Zn(2+) as a cofactor.

Functionally, binds 16S rRNA, required for the assembly of 30S particles and may also be responsible for determining the conformation of the 16S rRNA at the A site. This is Small ribosomal subunit protein uS14 (rpsN) from Legionella pneumophila (strain Paris).